Reading from the N-terminus, the 68-residue chain is Large ribosomal subunit protein uL30 (68 aa).

This sequence belongs to the universal ribosomal protein uL30 family. In terms of assembly, part of the 50S ribosomal subunit.

The chain is Large ribosomal subunit protein uL30 from Paenarthrobacter aurescens (strain TC1).